Here is a 359-residue protein sequence, read N- to C-terminus: 3-dehydroquinate synthase (359 aa).

Residues 71–76, 105–109, 129–130, Lys142, and Lys151 each bind NAD(+); these read DGEAYK, GVVGD, and TT. Residues Glu184, His247, and His264 each contribute to the Zn(2+) site.

The protein belongs to the sugar phosphate cyclases superfamily. Dehydroquinate synthase family. Co(2+) serves as cofactor. It depends on Zn(2+) as a cofactor. The cofactor is NAD(+).

It localises to the cytoplasm. It carries out the reaction 7-phospho-2-dehydro-3-deoxy-D-arabino-heptonate = 3-dehydroquinate + phosphate. It participates in metabolic intermediate biosynthesis; chorismate biosynthesis; chorismate from D-erythrose 4-phosphate and phosphoenolpyruvate: step 2/7. Functionally, catalyzes the conversion of 3-deoxy-D-arabino-heptulosonate 7-phosphate (DAHP) to dehydroquinate (DHQ). This is 3-dehydroquinate synthase from Burkholderia lata (strain ATCC 17760 / DSM 23089 / LMG 22485 / NCIMB 9086 / R18194 / 383).